The following is a 392-amino-acid chain: Putative transactivator/viroplasmin protein (392 aa).

Residues Met1 to Asn88 adopt a coiled-coil conformation. Residues Glu358 to Thr392 form a disordered region.

It belongs to the caulimoviridae viroplasmin family.

It localises to the host cytoplasm. In terms of biological role, enhances the translation of downstream ORFs on polycistronic mRNAs derived from cassava vein mosaic virus. The polypeptide is Putative transactivator/viroplasmin protein (Cassava vein mosaic virus (CsVMV)).